The following is a 244-amino-acid chain: 5-oxoprolinase subunit A (244 aa).

This sequence belongs to the LamB/PxpA family. In terms of assembly, forms a complex composed of PxpA, PxpB and PxpC.

It carries out the reaction 5-oxo-L-proline + ATP + 2 H2O = L-glutamate + ADP + phosphate + H(+). Functionally, catalyzes the cleavage of 5-oxoproline to form L-glutamate coupled to the hydrolysis of ATP to ADP and inorganic phosphate. This is 5-oxoprolinase subunit A from Salmonella choleraesuis (strain SC-B67).